Here is a 444-residue protein sequence, read N- to C-terminus: Probable glycine dehydrogenase (decarboxylating) subunit 1 (444 aa).

This sequence belongs to the GcvP family. N-terminal subunit subfamily. The glycine cleavage system is composed of four proteins: P, T, L and H. In this organism, the P 'protein' is a heterodimer of two subunits.

It carries out the reaction N(6)-[(R)-lipoyl]-L-lysyl-[glycine-cleavage complex H protein] + glycine + H(+) = N(6)-[(R)-S(8)-aminomethyldihydrolipoyl]-L-lysyl-[glycine-cleavage complex H protein] + CO2. In terms of biological role, the glycine cleavage system catalyzes the degradation of glycine. The P protein binds the alpha-amino group of glycine through its pyridoxal phosphate cofactor; CO(2) is released and the remaining methylamine moiety is then transferred to the lipoamide cofactor of the H protein. In Carboxydothermus hydrogenoformans (strain ATCC BAA-161 / DSM 6008 / Z-2901), this protein is Probable glycine dehydrogenase (decarboxylating) subunit 1.